Reading from the N-terminus, the 95-residue chain is Defensin (95 aa).

The signal sequence occupies residues 1-17; sequence MKNYVFALLVVTAVAIA. A propeptide spanning residues 18–55 is cleaved from the precursor; the sequence is LPNEDKNAPMRVHLLPQKEDESLKLEVTPVKEHHRTRR. 3 disulfides stabilise this stretch: Cys-58–Cys-85, Cys-71–Cys-91, and Cys-75–Cys-93.

It belongs to the invertebrate defensin family. Type 1 subfamily.

The protein resides in the secreted. Its function is as follows. Antibacterial peptide mostly active against Gram-positive bacteria. This chain is Defensin, found in Formica aquilonia (Red wood ant).